Here is a 304-residue protein sequence, read N- to C-terminus: Phosphate transport system permease protein PstA 1 (304 aa).

Helical transmembrane passes span 36 to 56 (FFFT…WVVI), 96 to 116 (AGVA…YLVE), 132 to 152 (VLAG…WIAT), 155 to 175 (FQQS…PVVV), 204 to 224 (IVRI…LLSI), and 276 to 296 (WGAA…AAMI). An ABC transmembrane type-1 domain is found at 89–297 (LYGTLVQAGV…TINLAAAMIR (209 aa)).

This sequence belongs to the binding-protein-dependent transport system permease family. CysTW subfamily.

The protein localises to the cell membrane. Its function is as follows. Part of the binding-protein-dependent transport system for phosphate; probably responsible for the translocation of the substrate across the membrane. This Mycobacterium tuberculosis (strain CDC 1551 / Oshkosh) protein is Phosphate transport system permease protein PstA 1 (pstA1).